A 193-amino-acid polypeptide reads, in one-letter code: Xanthine phosphoribosyltransferase (193 aa).

Xanthine is bound by residues leucine 20 and asparagine 27. 128–132 (ANGDA) contributes to the 5-phospho-alpha-D-ribose 1-diphosphate binding site. Lysine 156 is a xanthine binding site.

Belongs to the purine/pyrimidine phosphoribosyltransferase family. Xpt subfamily. Homodimer.

The protein resides in the cytoplasm. The enzyme catalyses XMP + diphosphate = xanthine + 5-phospho-alpha-D-ribose 1-diphosphate. The protein operates within purine metabolism; XMP biosynthesis via salvage pathway; XMP from xanthine: step 1/1. In terms of biological role, converts the preformed base xanthine, a product of nucleic acid breakdown, to xanthosine 5'-monophosphate (XMP), so it can be reused for RNA or DNA synthesis. This Staphylococcus haemolyticus (strain JCSC1435) protein is Xanthine phosphoribosyltransferase.